We begin with the raw amino-acid sequence, 88 residues long: Potassium channel toxin MeuTXKbeta3-meucin-24 (88 aa).

Residues 1-22 form the signal peptide; that stretch reads MMKQQFFLFLAVIVMISSVIEA. One can recognise a BetaSPN-type CS-alpha/beta domain in the interval 55 to 88; that stretch reads EYACPVIEKWCEDHCQAKNAIGRCENTECKCLSK. Disulfide bonds link C58–C78, C65–C83, and C69–C85.

Belongs to the long chain scorpion toxin family. Class 2 subfamily. As to expression, expressed by the venom gland.

It is found in the secreted. Inhibits voltage-gated potassium channels. Functionally, the synthetic meucin-24 inhibits the development of P.berghei ookinetes, kills intraerythrocytic P.falciparum, and is cytotoxic to the Drosophila S2 cells at micromolar concentrations. No antibacterial, antifungal and hemolytic activities have been found at micromolar concentrations. This chain is Potassium channel toxin MeuTXKbeta3-meucin-24, found in Mesobuthus eupeus (Lesser Asian scorpion).